Reading from the N-terminus, the 291-residue chain is Phosphate import ATP-binding protein PstB (291 aa).

Positions 1 to 17 are enriched in basic and acidic residues; it reads MANTNVKEKELAKHTDQ. The tract at residues 1–40 is disordered; sequence MANTNVKEKELAKHTDQSQESISTVVSSNEVKHNKESDSN. The span at 18-29 shows a compositional bias: polar residues; it reads SQESISTVVSSN. Positions 30 to 40 are enriched in basic and acidic residues; it reads EVKHNKESDSN. The 242-residue stretch at 45 to 286 folds into the ABC transporter domain; it reads YSTQNLDLWY…PSDKQTEDYI (242 aa). Residue 77 to 84 participates in ATP binding; it reads GPSGCGKS.

Belongs to the ABC transporter superfamily. Phosphate importer (TC 3.A.1.7) family. The complex is composed of two ATP-binding proteins (PstB), two transmembrane proteins (PstC and PstA) and a solute-binding protein (PstS).

The protein localises to the cell membrane. The catalysed reaction is phosphate(out) + ATP + H2O = ADP + 2 phosphate(in) + H(+). In terms of biological role, part of the ABC transporter complex PstSACB involved in phosphate import. Responsible for energy coupling to the transport system. This is Phosphate import ATP-binding protein PstB from Staphylococcus haemolyticus (strain JCSC1435).